The chain runs to 716 residues: DNA ligase (716 aa).

Residues 49–53 (DAAYD), 98–99 (SL), and E132 each bind NAD(+). K134 functions as the N6-AMP-lysine intermediate in the catalytic mechanism. R155, E192, K308, and K332 together coordinate NAD(+). C437, C439, C461, and C467 together coordinate Zn(2+). Residues 638–716 (KRNSPIATKT…EDEWLQLIGE (79 aa)) form the BRCT domain.

Belongs to the NAD-dependent DNA ligase family. LigA subfamily. The cofactor is Mg(2+). Mn(2+) is required as a cofactor.

The enzyme catalyses NAD(+) + (deoxyribonucleotide)n-3'-hydroxyl + 5'-phospho-(deoxyribonucleotide)m = (deoxyribonucleotide)n+m + AMP + beta-nicotinamide D-nucleotide.. DNA ligase that catalyzes the formation of phosphodiester linkages between 5'-phosphoryl and 3'-hydroxyl groups in double-stranded DNA using NAD as a coenzyme and as the energy source for the reaction. It is essential for DNA replication and repair of damaged DNA. The polypeptide is DNA ligase (Bradyrhizobium sp. (strain ORS 278)).